An 80-amino-acid polypeptide reads, in one-letter code: Serine palmitoyltransferase small subunit B (80 aa).

Topologically, residues 1–11 (MDVKHIKDYLS) are cytoplasmic. Residues 12–29 (WLYYQYLLITCSYVLEPW) traverse the membrane as a helical segment. Residues 30–36 (EQSIFNT) are Lumenal-facing. Residues 37–57 (LLLTIIAMVIYSSYIFIPIHV) form a helical membrane-spanning segment. Over 58 to 80 (RLAVEFFSGIFGGQHESTVALMS) the chain is Cytoplasmic.

Belongs to the SPTSS family. SPTSSB subfamily. Component of the serine palmitoyltransferase (SPT) complex, which is composed of SPTLC1, SPTLC2 or SPTLC3 and SPTSSA or SPTSSB. The heterodimer consisting of SPTLC1 and SPTLC2/SPTLC3 forms the catalytic core of the enzyme, while SPTSSA or SPTSSB subunits determine substrate specificity. SPT also interacts with ORMDL proteins, especially ORMDL3, which negatively regulate SPT activity in the presence of ceramides.

The protein localises to the endoplasmic reticulum membrane. It participates in lipid metabolism; sphingolipid metabolism. In terms of biological role, component of the serine palmitoyltransferase multisubunit enzyme (SPT) that catalyzes the initial and rate-limiting step in sphingolipid biosynthesis by condensing L-serine and activated acyl-CoA (most commonly palmitoyl-CoA) to form long-chain bases. The SPT complex is composed of SPTLC1, SPTLC2 or SPTLC3 and SPTSSA or SPTSSB. Within this complex, the heterodimer consisting of SPTLC1 and SPTLC2/SPTLC3 forms the catalytic core. Within the SPT complex, SPTSSB stimulates the catalytic activity and plays a role in substrate specificity. SPT complexes with this subunit showing a preference for longer acyl-CoAs. The SPTLC1-SPTLC2-SPTSSB complex shows a strong preference for C18-CoA substrate, while the SPTLC1-SPTLC3-SPTSSB isozyme displays an ability to use a broader range of acyl-CoAs, without apparent preference. In Xenopus tropicalis (Western clawed frog), this protein is Serine palmitoyltransferase small subunit B (sptssb).